The sequence spans 215 residues: Cytochrome b6 (215 aa).

A helical membrane pass occupies residues 32–52 (IFYCLGGITLTCFLVQVATGF). A heme c-binding site is contributed by Cys35. His86 and His100 together coordinate heme b. 3 helical membrane-spanning segments follow: residues 90–110 (ASMM…TGGF), 116–136 (LTWV…VTGY), and 186–206 (LHTF…FLMI). Heme b contacts are provided by His187 and His202.

Belongs to the cytochrome b family. PetB subfamily. As to quaternary structure, the 4 large subunits of the cytochrome b6-f complex are cytochrome b6, subunit IV (17 kDa polypeptide, PetD), cytochrome f and the Rieske protein, while the 4 small subunits are PetG, PetL, PetM and PetN. The complex functions as a dimer. Heme b serves as cofactor. The cofactor is heme c.

The protein resides in the plastid. The protein localises to the chloroplast thylakoid membrane. Component of the cytochrome b6-f complex, which mediates electron transfer between photosystem II (PSII) and photosystem I (PSI), cyclic electron flow around PSI, and state transitions. In Citrus sinensis (Sweet orange), this protein is Cytochrome b6.